The following is a 271-amino-acid chain: Methylcorrinoid:tetrahydrofolate methyltransferase (271 aa).

Positions 1–247 (MIIIGEKLNG…GAIFATDALL (247 aa)) constitute a Pterin-binding domain.

The protein belongs to the vitamin-B12 dependent methionine synthase family. As to quaternary structure, the proline betaine:THF methyl transfer system is composed of two methyltransferases, MtpB and MtqA, and the corrinoid protein MtqC. The L-carnitine:THF methyl transfer system is composed of two methyltransferases, MtcB and MtqA, and the corrinoid protein MtqC.

The enzyme catalyses methyl-Co(III)-[quaternary-amine-specific corrinoid protein] + (6S)-5,6,7,8-tetrahydrofolate = Co(I)-[quaternary-amine-specific corrinoid protein] + (6S)-5-methyl-5,6,7,8-tetrahydrofolate + H(+). Involved in the degradation of the quaternary amines L-proline betaine and L-carnitine. Component of a corrinoid-dependent methyltransferase system that transfers a methyl group from L-proline betaine or L-carnitine to tetrahydrofolate (THF), forming methyl-THF, a key intermediate in the Wood-Ljungdahl acetogenesis pathway. MtqA catalyzes the transfer of a methyl group from the methylated corrinoid protein MtqC to THF, forming methyl-THF. This Eubacterium limosum protein is Methylcorrinoid:tetrahydrofolate methyltransferase.